A 592-amino-acid polypeptide reads, in one-letter code: Putative amidase ARB_02965 (592 aa).

The signal sequence occupies residues M1–A21. The N-linked (GlcNAc...) asparagine glycan is linked to N120. The active-site Charge relay system is K161. An N-linked (GlcNAc...) asparagine glycan is attached at N217. S242 (charge relay system) is an active-site residue. Substrate contacts are provided by residues S242 and T263 to S266. The active-site Acyl-ester intermediate is the S266. N326, N430, and N528 each carry an N-linked (GlcNAc...) asparagine glycan.

The protein belongs to the amidase family.

It is found in the secreted. This Arthroderma benhamiae (strain ATCC MYA-4681 / CBS 112371) (Trichophyton mentagrophytes) protein is Putative amidase ARB_02965.